The primary structure comprises 144 residues: Putative sugar phosphate isomerase RC0402 (144 aa).

His12 lines the substrate pocket. His101 acts as the Proton donor in catalysis. Position 135 (Arg135) interacts with substrate.

Belongs to the LacAB/RpiB family.

This Rickettsia conorii (strain ATCC VR-613 / Malish 7) protein is Putative sugar phosphate isomerase RC0402.